The chain runs to 209 residues: Prolactin (209 aa).

The first 24 residues, 1 to 24 (MAQRFKGSNLFLTALLCLASQGHA), serve as a signal peptide directing secretion. 2 disulfide bridges follow: C70–C184 and C201–C209.

The protein belongs to the somatotropin/prolactin family.

It localises to the secreted. This Anguilla japonica (Japanese eel) protein is Prolactin (prl).